The primary structure comprises 653 residues: Large subunit GTPase 1 homolog (653 aa).

A disordered region spans residues 1–47 (MGKKRGTGLGRSLQRQRGSERRGASSWLHASEVVGESGPERRSAVEQ). The CP-type G domain occupies 155–439 (WRQLWRVIER…LCDCPGLVMP (285 aa)). 203 to 206 (NKAD) provides a ligand contact to GTP. Residues 248 to 275 (ADSVADDLSDSEEESSSQEEDVTAEDSA) show a composition bias toward acidic residues. The segment at 248–323 (ADSVADDLSD…TCSEDEGGDK (76 aa)) is disordered. Residues 276 to 291 (ESTSTGSALQTENQCL) are compositionally biased toward polar residues. Acidic residues predominate over residues 293-320 (SDDDSSDEYEDCEDEEEDDWQTCSEDEG). GTP contacts are provided by residues 388-395 (GYPNVGKS) and 432-435 (DCPG). The segment at 621–653 (APSAGSVVGKPWKKHGNRNKKEKVRRITKHLEN) is disordered. Residues 631–653 (PWKKHGNRNKKEKVRRITKHLEN) are compositionally biased toward basic residues.

This sequence belongs to the TRAFAC class YlqF/YawG GTPase family. LSG1 subfamily.

The protein resides in the cytoplasm. It localises to the endoplasmic reticulum. Its subcellular location is the nucleus. It is found in the cajal body. The catalysed reaction is GTP + H2O = GDP + phosphate + H(+). GTPase required for the XPO1/CRM1-mediated nuclear export of the 60S ribosomal subunit. Probably acts by mediating the release of NMD3 from the 60S ribosomal subunit after export into the cytoplasm. In terms of biological role, functions as a GTPase. May act by mediating the release of NMD3 from the 60S ribosomal subunit after export into the cytoplasm during the 60S ribosomal subunit maturation. In Gallus gallus (Chicken), this protein is Large subunit GTPase 1 homolog.